The following is a 561-amino-acid chain: Small ribosomal subunit protein bS1 (561 aa).

S1 motif domains follow at residues 22–88 (GEVI…LSRE), 106–172 (GDIL…VSRR), 193–261 (GSVI…LGMK), 278–348 (GTRL…LGMK), 365–435 (GDKI…LGIK), and 452–521 (GSLV…LSVK).

It belongs to the bacterial ribosomal protein bS1 family.

In terms of biological role, binds mRNA; thus facilitating recognition of the initiation point. It is needed to translate mRNA with a short Shine-Dalgarno (SD) purine-rich sequence. This chain is Small ribosomal subunit protein bS1 (rpsA), found in Neisseria meningitidis serogroup B (strain ATCC BAA-335 / MC58).